The primary structure comprises 112 residues: Small ribosomal subunit protein bS6 (112 aa).

The protein belongs to the bacterial ribosomal protein bS6 family.

Binds together with bS18 to 16S ribosomal RNA. The protein is Small ribosomal subunit protein bS6 of Azobacteroides pseudotrichonymphae genomovar. CFP2.